A 181-amino-acid chain; its full sequence is Large ribosomal subunit protein uL5 (181 aa).

It belongs to the universal ribosomal protein uL5 family. In terms of assembly, part of the 50S ribosomal subunit; part of the 5S rRNA/L5/L18/L25 subcomplex. Contacts the 5S rRNA and the P site tRNA. Forms a bridge to the 30S subunit in the 70S ribosome.

This is one of the proteins that bind and probably mediate the attachment of the 5S RNA into the large ribosomal subunit, where it forms part of the central protuberance. In the 70S ribosome it contacts protein S13 of the 30S subunit (bridge B1b), connecting the 2 subunits; this bridge is implicated in subunit movement. Contacts the P site tRNA; the 5S rRNA and some of its associated proteins might help stabilize positioning of ribosome-bound tRNAs. In Campylobacter jejuni subsp. jejuni serotype O:6 (strain 81116 / NCTC 11828), this protein is Large ribosomal subunit protein uL5.